A 142-amino-acid polypeptide reads, in one-letter code: Required for drug-induced death protein 1 (142 aa).

2 disordered regions span residues 1–32 and 46–66; these read MTVG…DEEA and EAAA…TRGA. Residues 116–138 form a helical membrane-spanning segment; that stretch reads VVIGLQGFAAAYSAPFAVATSVV.

The protein localises to the membrane. Functionally, regulates drug efflux through modulation of ABCB1 localization and activity. The polypeptide is Required for drug-induced death protein 1 (Homo sapiens (Human)).